Reading from the N-terminus, the 338-residue chain is MSQEFNVVVLGASGAVGQTIIEILQERNFPIAKLFPLASSRSAGGTVSFNGKQVEILDVDDFDWSQAQIGFFSAGGDVSEKWAPIAAESGCVVIDNTSHFRYDNDVPLVIPEVNPEAIADFRNRNIIANPNCSTIQMLVALKPIYDAFGISRINVATYQSVSGSGKEAIAELAGQCSKLLQGLPIEPKVYSKQIAFNVLPQIDTFMENGYTKEEMKMVWETQKIFGDDNIVVNPTAVRVPVFFGHSEAIHLETIQPAEAEDVKAVLRDAPGIELFESNEEYPTAVTESAGTDPVYVGRVRKDISHSHGINLWVVSDNIRKGAALNSVQIAEVLIRDYY.

NADP(+)-binding positions include 13–16 (SGAV) and 41–42 (RS). A phosphate-binding site is contributed by arginine 101. Cysteine 132 acts as the Acyl-thioester intermediate in catalysis. Glutamine 159 is a substrate binding site. NADP(+) is bound by residues 162 to 163 (SG) and proline 187. Phosphate is bound at residue lysine 216. A substrate-binding site is contributed by arginine 238. Residue histidine 245 is the Proton acceptor of the active site. Asparagine 317 lines the NADP(+) pocket.

It belongs to the aspartate-semialdehyde dehydrogenase family. In terms of assembly, homodimer.

It carries out the reaction L-aspartate 4-semialdehyde + phosphate + NADP(+) = 4-phospho-L-aspartate + NADPH + H(+). It participates in amino-acid biosynthesis; L-lysine biosynthesis via DAP pathway; (S)-tetrahydrodipicolinate from L-aspartate: step 2/4. It functions in the pathway amino-acid biosynthesis; L-methionine biosynthesis via de novo pathway; L-homoserine from L-aspartate: step 2/3. Its pathway is amino-acid biosynthesis; L-threonine biosynthesis; L-threonine from L-aspartate: step 2/5. Functionally, catalyzes the NADPH-dependent formation of L-aspartate-semialdehyde (L-ASA) by the reductive dephosphorylation of L-aspartyl-4-phosphate. The sequence is that of Aspartate-semialdehyde dehydrogenase from Shewanella sp. (strain DB6705).